A 90-amino-acid chain; its full sequence is YcgL domain-containing protein plu2139 (90 aa).

Positions 1–85 (MICAIYSSPK…PVENLMNAHL (85 aa)) constitute a YcgL domain.

The protein is YcgL domain-containing protein plu2139 of Photorhabdus laumondii subsp. laumondii (strain DSM 15139 / CIP 105565 / TT01) (Photorhabdus luminescens subsp. laumondii).